A 63-amino-acid polypeptide reads, in one-letter code: Conotoxin PnMRCL-0111 (63 aa).

A signal peptide spans 1-22 (MHCLSVFVILLLLTASAPSVDA). Residues 23 to 50 (QPKTEDDVPLSSFHDDLQRTVRTLLDIR) constitute a propeptide that is removed on maturation. Trp62 is modified (tryptophan amide).

The protein belongs to the conotoxin T superfamily. In terms of processing, contains 2 disulfide bonds that can be either 'C1-C3, C2-C4' or 'C1-C4, C2-C3', since these disulfide connectivities have been observed for conotoxins with cysteine framework V (for examples, see AC P0DQQ7 and AC P81755). As to expression, expressed by the venom duct.

It is found in the secreted. The chain is Conotoxin PnMRCL-0111 from Conus pennaceus (Feathered cone).